Here is a 702-residue protein sequence, read N- to C-terminus: Putative GMC-type oxidoreductase R135 (702 aa).

A helical transmembrane segment spans residues 55-75 (LTGDIVIIGAGAAGSLLAHYL). 58–88 (DIVIIGAGAAGSLLAHYLARFSNMKIILLEA) is a binding site for FAD. Residue H628 is part of the active site.

It belongs to the GMC oxidoreductase family. Requires FAD as cofactor.

The protein localises to the virion. The protein resides in the host membrane. The protein is Putative GMC-type oxidoreductase R135 of Acanthamoeba polyphaga (Amoeba).